The primary structure comprises 233 residues: uncharacterized protein (233 aa).

It belongs to the RHS family.

This is an uncharacterized protein from Escherichia coli (strain K12).